The sequence spans 457 residues: Hepatocyte nuclear factor 3-beta (457 aa).

Residues 14–93 (DWSSYYAEPE…AGAMAGMGGS (80 aa)) form a transactivation domain 1 region. A Nuclear localization signal motif is present at residues 106-113 (LSPSLSPL). T156 is modified (phosphothreonine). Residues 159 to 252 (KPPYSYISLI…FENGCYLRRQ (94 aa)) constitute a DNA-binding region (fork-head). S212 and S283 each carry phosphoserine. Low complexity predominate over residues 280 to 292 (AQASQAQLGEAAG). The interval 280-365 (AQASQAQLGE…PGLPPEAHLK (86 aa)) is disordered. Polar residues predominate over residues 298 to 310 (PAGTESPHSSASP). Residue T301 is modified to Phosphothreonine. Residues S303, S306, S307, and S309 each carry the phosphoserine modification. Residues 339 to 352 (PGQQQQAAAHLLGP) are compositionally biased toward low complexity. Residues 361-457 (EAHLKPEHHY…VYSRPIMNSS (97 aa)) form a transactivation domain 2 region. S436 and S457 each carry phosphoserine.

As to quaternary structure, binds DNA as a monomer. Binds TLE1. Interacts with FOXA1 and FOXA3. Interacts with PRKDC. Interacts with AKT1. Interacts with TET1; this interaction may recruit TET1 to specific genomic loci to mediate their demethylation. In terms of processing, phosphorylation on Thr-156 abolishes binding to target promoters and subsequent transcription activation upon insulin stimulation.

It is found in the nucleus. Its subcellular location is the cytoplasm. Transcription factor that is involved in embryonic development, establishment of tissue-specific gene expression and regulation of gene expression in differentiated tissues. Is thought to act as a 'pioneer' factor opening the compacted chromatin for other proteins through interactions with nucleosomal core histones and thereby replacing linker histones at target enhancer and/or promoter sites. Binds DNA with the consensus sequence 5'-[AC]A[AT]T[AG]TT[GT][AG][CT]T[CT]-3'. In embryonic development is required for notochord formation. Involved in the development of multiple endoderm-derived organ systems such as the liver, pancreas and lungs; FOXA1 and FOXA2 seem to have at least in part redundant roles. Originally described as a transcription activator for a number of liver genes such as AFP, albumin, tyrosine aminotransferase, PEPCK, etc. Interacts with the cis-acting regulatory regions of these genes. Involved in glucose homeostasis; regulates the expression of genes important for glucose sensing in pancreatic beta-cells and glucose homeostasis. Involved in regulation of fat metabolism. Binds to fibrinogen beta promoter and is involved in IL6-induced fibrinogen beta transcriptional activation. This Homo sapiens (Human) protein is Hepatocyte nuclear factor 3-beta (FOXA2).